We begin with the raw amino-acid sequence, 274 residues long: Penicillin-insensitive murein endopeptidase (274 aa).

Positions 1 to 19 (MNKTAIALLALLASSASLA) are cleaved as a signal peptide. 3 disulfide bridges follow: Cys-44/Cys-265, Cys-187/Cys-235, and Cys-216/Cys-223. Zn(2+)-binding residues include His-110, His-113, Asp-120, Asp-147, His-150, and His-211. The interval 227 to 274 (PLPPPGDGCGAELQSWFEPPKPGTTKPEKKTPPPLPPSCQALLDEHVI) is disordered.

It belongs to the peptidase M74 family. Dimer. Zn(2+) is required as a cofactor.

It is found in the periplasm. In terms of biological role, murein endopeptidase that cleaves the D-alanyl-meso-2,6-diamino-pimelyl amide bond that connects peptidoglycan strands. Likely plays a role in the removal of murein from the sacculus. The sequence is that of Penicillin-insensitive murein endopeptidase from Escherichia coli O6:K15:H31 (strain 536 / UPEC).